Here is a 279-residue protein sequence, read N- to C-terminus: Digeranylgeranylglyceryl phosphate synthase (279 aa).

The next 8 membrane-spanning stretches (helical) occupy residues 14–34 (VKNCLTASFGTIIGGLIASNF), 36–56 (FGLIGYILLASLIVFLVCGFG), 94–114 (LMISGIIISLFNMICFAIALI), 131–153 (IIGNLIVAYLTGSIFIFGGASVG), 157–175 (ITLILFLCALFATWSREII), 201–221 (IFVAIGFLLCSILLSPLPYIL), 224–244 (FGAPYLMAIMICNVLFILAVL), and 259–279 (SKYIKIIMNLVLLSFVIGSLM).

Belongs to the UbiA prenyltransferase family. DGGGP synthase subfamily. Mg(2+) serves as cofactor.

It localises to the cell membrane. The enzyme catalyses sn-3-O-(geranylgeranyl)glycerol 1-phosphate + (2E,6E,10E)-geranylgeranyl diphosphate = 2,3-bis-O-(geranylgeranyl)-sn-glycerol 1-phosphate + diphosphate. The protein operates within membrane lipid metabolism; glycerophospholipid metabolism. Prenyltransferase that catalyzes the transfer of the geranylgeranyl moiety of geranylgeranyl diphosphate (GGPP) to the C2 hydroxyl of (S)-3-O-geranylgeranylglyceryl phosphate (GGGP). This reaction is the second ether-bond-formation step in the biosynthesis of archaeal membrane lipids. This chain is Digeranylgeranylglyceryl phosphate synthase, found in Methanococcus aeolicus (strain ATCC BAA-1280 / DSM 17508 / OCM 812 / Nankai-3).